The sequence spans 397 residues: uncharacterized protein (397 aa).

Helical transmembrane passes span 255–275, 284–304, 308–328, and 370–390; these read LLTY…ICYA, MITF…VLLA, LITA…PLPL, and VLLV…YCLG.

It localises to the cell membrane. This is an uncharacterized protein from Methanocaldococcus jannaschii (strain ATCC 43067 / DSM 2661 / JAL-1 / JCM 10045 / NBRC 100440) (Methanococcus jannaschii).